The following is a 242-amino-acid chain: Adenosine 5'-phosphosulfate reductase (242 aa).

[4Fe-4S] cluster contacts are provided by cysteine 125, cysteine 126, cysteine 208, and cysteine 211. Catalysis depends on cysteine 234, which acts as the Nucleophile; cysteine thiosulfonate intermediate.

The protein belongs to the PAPS reductase family. CysH subfamily. It depends on [4Fe-4S] cluster as a cofactor.

Its subcellular location is the cytoplasm. It catalyses the reaction [thioredoxin]-disulfide + sulfite + AMP + 2 H(+) = adenosine 5'-phosphosulfate + [thioredoxin]-dithiol. Its pathway is sulfur metabolism; hydrogen sulfide biosynthesis; sulfite from sulfate. Functionally, catalyzes the formation of sulfite from adenosine 5'-phosphosulfate (APS) using thioredoxin as an electron donor. This is Adenosine 5'-phosphosulfate reductase from Staphylococcus saprophyticus subsp. saprophyticus (strain ATCC 15305 / DSM 20229 / NCIMB 8711 / NCTC 7292 / S-41).